Consider the following 155-residue polypeptide: Endoribonuclease YbeY (155 aa).

Residues His114, His118, and His124 each contribute to the Zn(2+) site.

The protein belongs to the endoribonuclease YbeY family. It depends on Zn(2+) as a cofactor.

Its subcellular location is the cytoplasm. Functionally, single strand-specific metallo-endoribonuclease involved in late-stage 70S ribosome quality control and in maturation of the 3' terminus of the 16S rRNA. The protein is Endoribonuclease YbeY of Proteus mirabilis (strain HI4320).